A 382-amino-acid polypeptide reads, in one-letter code: Processive diacylglycerol beta-glucosyltransferase (382 aa).

This sequence belongs to the glycosyltransferase 28 family. UgtP subfamily.

The protein localises to the cell membrane. It catalyses the reaction a 1,2-diacyl-3-O-(beta-D-glucopyranosyl)-sn-glycerol + UDP-alpha-D-glucose = a 1,2-diacyl-3-O-(beta-D-Glc-(1-&gt;6)-beta-D-Glc)-sn-glycerol + UDP + H(+). The enzyme catalyses a 1,2-diacyl-3-O-(beta-D-Glc-(1-&gt;6)-beta-D-Glc)-sn-glycerol + UDP-alpha-D-glucose = a 1,2-diacyl-3-O-(beta-D-Glc-(1-&gt;6)-beta-D-Glc-(1-&gt;6)-beta-D-Glc)-sn-glycerol + UDP + H(+). The catalysed reaction is a 1,2-diacyl-sn-glycerol + UDP-alpha-D-glucose = a 1,2-diacyl-3-O-(beta-D-glucopyranosyl)-sn-glycerol + UDP + H(+). The protein operates within glycolipid metabolism; diglucosyl-diacylglycerol biosynthesis. Processive glucosyltransferase involved in the biosynthesis of both the bilayer- and non-bilayer-forming membrane glucolipids. Is able to successively transfer up to three glucosyl residues to diacylglycerol (DAG), thereby catalyzing the formation of beta-monoglucosyl-DAG (3-O-(beta-D-glucopyranosyl)-1,2-diacyl-sn-glycerol), beta-diglucosyl-DAG (3-O-(beta-D-glucopyranosyl-beta-(1-&gt;6)-D-glucopyranosyl)-1,2-diacyl-sn-glycerol) and beta-triglucosyl-DAG (3-O-(beta-D-glucopyranosyl-beta-(1-&gt;6)-D-glucopyranosyl-beta-(1-&gt;6)-D-glucopyranosyl)-1,2-diacyl-sn-glycerol). Beta-diglucosyl-DAG is the predominant glycolipid found in Bacillales and is also used as a membrane anchor for lipoteichoic acid (LTA). Also seems to be able to form beta-tetraglucosyl-DAG, although this glycolipid has not been found in B.subtilis membrane. UgtP can only use UDP-glucose as sugar donor. The sequence is that of Processive diacylglycerol beta-glucosyltransferase from Bacillus subtilis (strain 168).